We begin with the raw amino-acid sequence, 137 residues long: Endoribonuclease YbeY (137 aa).

Residues His-103, His-107, and His-113 each coordinate Zn(2+).

Belongs to the endoribonuclease YbeY family. Zn(2+) is required as a cofactor.

It localises to the cytoplasm. Its function is as follows. Single strand-specific metallo-endoribonuclease involved in late-stage 70S ribosome quality control and in maturation of the 3' terminus of the 16S rRNA. This Acholeplasma laidlawii (strain PG-8A) protein is Endoribonuclease YbeY.